Reading from the N-terminus, the 334-residue chain is Holliday junction branch migration complex subunit RuvB (334 aa).

The interval 1 to 182 (MDERLVSSEA…FGVLSRLEYY (182 aa)) is large ATPase domain (RuvB-L). ATP contacts are provided by residues Leu-21, Arg-22, Gly-63, Lys-66, Thr-67, Thr-68, 129–131 (EDF), Arg-172, Tyr-182, and Arg-219. Residue Thr-67 participates in Mg(2+) binding. The segment at 183–253 (TQEELTDIVS…IAHDALERLQ (71 aa)) is small ATPAse domain (RuvB-S). Residues 256–334 (ALGLDHIDHK…HFRLEAPARD (79 aa)) form a head domain (RuvB-H) region. Positions 311 and 316 each coordinate DNA.

It belongs to the RuvB family. As to quaternary structure, homohexamer. Forms an RuvA(8)-RuvB(12)-Holliday junction (HJ) complex. HJ DNA is sandwiched between 2 RuvA tetramers; dsDNA enters through RuvA and exits via RuvB. An RuvB hexamer assembles on each DNA strand where it exits the tetramer. Each RuvB hexamer is contacted by two RuvA subunits (via domain III) on 2 adjacent RuvB subunits; this complex drives branch migration. In the full resolvosome a probable DNA-RuvA(4)-RuvB(12)-RuvC(2) complex forms which resolves the HJ.

Its subcellular location is the cytoplasm. The catalysed reaction is ATP + H2O = ADP + phosphate + H(+). In terms of biological role, the RuvA-RuvB-RuvC complex processes Holliday junction (HJ) DNA during genetic recombination and DNA repair, while the RuvA-RuvB complex plays an important role in the rescue of blocked DNA replication forks via replication fork reversal (RFR). RuvA specifically binds to HJ cruciform DNA, conferring on it an open structure. The RuvB hexamer acts as an ATP-dependent pump, pulling dsDNA into and through the RuvAB complex. RuvB forms 2 homohexamers on either side of HJ DNA bound by 1 or 2 RuvA tetramers; 4 subunits per hexamer contact DNA at a time. Coordinated motions by a converter formed by DNA-disengaged RuvB subunits stimulates ATP hydrolysis and nucleotide exchange. Immobilization of the converter enables RuvB to convert the ATP-contained energy into a lever motion, pulling 2 nucleotides of DNA out of the RuvA tetramer per ATP hydrolyzed, thus driving DNA branch migration. The RuvB motors rotate together with the DNA substrate, which together with the progressing nucleotide cycle form the mechanistic basis for DNA recombination by continuous HJ branch migration. Branch migration allows RuvC to scan DNA until it finds its consensus sequence, where it cleaves and resolves cruciform DNA. The polypeptide is Holliday junction branch migration complex subunit RuvB (Bacillus velezensis (strain DSM 23117 / BGSC 10A6 / LMG 26770 / FZB42) (Bacillus amyloliquefaciens subsp. plantarum)).